A 63-amino-acid polypeptide reads, in one-letter code: Large ribosomal subunit protein eL37 (63 aa).

Zn(2+) is bound by residues Cys-20, Cys-23, Cys-35, and Cys-38. The C4-type zinc-finger motif lies at Cys-20–Cys-38.

It belongs to the eukaryotic ribosomal protein eL37 family. Zn(2+) is required as a cofactor.

Functionally, binds to the 23S rRNA. This is Large ribosomal subunit protein eL37 from Thermococcus gammatolerans (strain DSM 15229 / JCM 11827 / EJ3).